The sequence spans 675 residues: Methionine--tRNA ligase (675 aa).

The 'HIGH' region motif lies at 12–22 (PYANGPIHLGH). 4 residues coordinate Zn(2+): C143, C146, C156, and C159. The 'KMSKS' region signature appears at 328-332 (KMSKS). K331 lines the ATP pocket. The tRNA-binding domain maps to 574 to 675 (DFAKVDLRIA…QGAQPGMRVK (102 aa)).

This sequence belongs to the class-I aminoacyl-tRNA synthetase family. MetG type 1 subfamily. In terms of assembly, homodimer. Zn(2+) is required as a cofactor.

Its subcellular location is the cytoplasm. It carries out the reaction tRNA(Met) + L-methionine + ATP = L-methionyl-tRNA(Met) + AMP + diphosphate. Its function is as follows. Is required not only for elongation of protein synthesis but also for the initiation of all mRNA translation through initiator tRNA(fMet) aminoacylation. This chain is Methionine--tRNA ligase, found in Alkalilimnicola ehrlichii (strain ATCC BAA-1101 / DSM 17681 / MLHE-1).